A 429-amino-acid polypeptide reads, in one-letter code: Histidinol dehydrogenase (429 aa).

The NAD(+) site is built by Tyr-130, Gln-191, and Asn-214. Substrate contacts are provided by Ser-237, Gln-259, and His-262. Gln-259 and His-262 together coordinate Zn(2+). Residues Glu-327 and His-328 each act as proton acceptor in the active site. Substrate contacts are provided by His-328, Asp-361, Glu-415, and His-420. Asp-361 is a binding site for Zn(2+). His-420 lines the Zn(2+) pocket.

Belongs to the histidinol dehydrogenase family. The cofactor is Zn(2+).

The catalysed reaction is L-histidinol + 2 NAD(+) + H2O = L-histidine + 2 NADH + 3 H(+). It functions in the pathway amino-acid biosynthesis; L-histidine biosynthesis; L-histidine from 5-phospho-alpha-D-ribose 1-diphosphate: step 9/9. Catalyzes the sequential NAD-dependent oxidations of L-histidinol to L-histidinaldehyde and then to L-histidine. The sequence is that of Histidinol dehydrogenase from Neisseria meningitidis serogroup B (strain ATCC BAA-335 / MC58).